The sequence spans 291 residues: Acetylglutamate kinase (291 aa).

Residues 64–65 (GG), R86, and N190 each bind substrate.

This sequence belongs to the acetylglutamate kinase family. ArgB subfamily.

It is found in the cytoplasm. It carries out the reaction N-acetyl-L-glutamate + ATP = N-acetyl-L-glutamyl 5-phosphate + ADP. It functions in the pathway amino-acid biosynthesis; L-arginine biosynthesis; N(2)-acetyl-L-ornithine from L-glutamate: step 2/4. Catalyzes the ATP-dependent phosphorylation of N-acetyl-L-glutamate. In Leptospira borgpetersenii serovar Hardjo-bovis (strain JB197), this protein is Acetylglutamate kinase.